Here is a 183-residue protein sequence, read N- to C-terminus: PLAT domain-containing protein 2 (183 aa).

An N-terminal signal peptide occupies residues Met-1 to Ala-25. The PLAT domain maps to Cys-31 to Asn-158.

It localises to the endoplasmic reticulum. Functionally, involved in response to abiotic stress. This is PLAT domain-containing protein 2 from Arabidopsis thaliana (Mouse-ear cress).